The sequence spans 189 residues: Cancer/testis antigen family 45 member A1 (189 aa).

Residues 1–23 show a composition bias toward basic and acidic residues; sequence MTDKTEKVAVDPETVFKRPRECD. Disordered regions lie at residues 1-27 and 83-118; these read MTDKTEKVAVDPETVFKRPRECDSPSY and RMMQKPGSNAPVGGNVTSSFSGDDLECRETASSPKS.

This sequence belongs to the CT45 family. In terms of tissue distribution, testis specific. Expressed in cancer cell lines.

Its subcellular location is the nucleus. The chain is Cancer/testis antigen family 45 member A1 from Homo sapiens (Human).